The primary structure comprises 103 residues: Small ribosomal subunit protein uS10 (103 aa).

Belongs to the universal ribosomal protein uS10 family. Part of the 30S ribosomal subunit.

In terms of biological role, involved in the binding of tRNA to the ribosomes. This chain is Small ribosomal subunit protein uS10, found in Pseudoalteromonas atlantica (strain T6c / ATCC BAA-1087).